The chain runs to 321 residues: Transmembrane and ubiquitin-like domain-containing protein 2 (321 aa).

The helical transmembrane segment at 36 to 56 (VMVVAGVVVLILALVLAWLST) threads the bilayer. Disordered stretches follow at residues 87 to 131 (LVAG…GGVE) and 145 to 170 (KRQA…LPPS). The segment covering 104-120 (EGNDEKAEEAGEGRGDS) has biased composition (basic and acidic residues). The region spanning 174-247 (ITVRLKFLND…IHCHRSPPGS (74 aa)) is the Ubiquitin-like domain. Transmembrane regions (helical) follow at residues 266 to 286 (LGVN…GVVW) and 295 to 315 (FFTA…SFLV).

It is found in the membrane. The sequence is that of Transmembrane and ubiquitin-like domain-containing protein 2 (TMUB2) from Homo sapiens (Human).